We begin with the raw amino-acid sequence, 208 residues long: MKNVRLISHPLIEHKLAILRDKNTQPFQFRMLVDEISHLMIFEATRDLNLREISVQTPVATTKARKLATKVMICPILRAALGMLDSVFTIIPDASVGFLGFQRNEKTAQAEFFYAKLPKDAKSRLAIIIDPMFATGGTAIDAVKFLRENSVKQIKFISIIAAPEGLRRFSEIYPDVEVYTAAIDERLNEKNYIVPGLGDAGDRVFNTL.

Residues Arg78, Arg103, and 130–138 (DPMFATGGT) each bind 5-phospho-alpha-D-ribose 1-diphosphate. Residues Ile193 and 198 to 200 (GDA) each bind uracil. Asp199 contacts 5-phospho-alpha-D-ribose 1-diphosphate.

It belongs to the UPRTase family. Requires Mg(2+) as cofactor.

The enzyme catalyses UMP + diphosphate = 5-phospho-alpha-D-ribose 1-diphosphate + uracil. Its pathway is pyrimidine metabolism; UMP biosynthesis via salvage pathway; UMP from uracil: step 1/1. With respect to regulation, allosterically activated by GTP. Catalyzes the conversion of uracil and 5-phospho-alpha-D-ribose 1-diphosphate (PRPP) to UMP and diphosphate. The protein is Uracil phosphoribosyltransferase of Campylobacter curvus (strain 525.92).